We begin with the raw amino-acid sequence, 94 residues long: Late cornified envelope-like proline-rich protein 1 (94 aa).

Disordered stretches follow at residues 1 to 26 (MSSDDKSKSNDPKTEPKNCDPKCEQK) and 47 to 94 (CPRE…PPPE). The segment covering 53 to 94 (PAPPKCPPCPSPSPSSCPPKPCAKPCPPKCPSSCPPPCPPPE) has biased composition (pro residues).

Belongs to the cornifin (SPRR) family.

The sequence is that of Late cornified envelope-like proline-rich protein 1 (LELP1) from Macaca fascicularis (Crab-eating macaque).